The following is a 274-amino-acid chain: Large ribosomal subunit protein uL2 (274 aa).

2 disordered regions span residues 37–59 and 222–262; these read KAKN…GGHK and GAAM…RTNK. Residues 50–59 show a composition bias toward basic residues; that stretch reads TTRHKGGGHK.

The protein belongs to the universal ribosomal protein uL2 family. Part of the 50S ribosomal subunit. Forms a bridge to the 30S subunit in the 70S ribosome.

Its function is as follows. One of the primary rRNA binding proteins. Required for association of the 30S and 50S subunits to form the 70S ribosome, for tRNA binding and peptide bond formation. It has been suggested to have peptidyltransferase activity; this is somewhat controversial. Makes several contacts with the 16S rRNA in the 70S ribosome. The protein is Large ribosomal subunit protein uL2 of Alcanivorax borkumensis (strain ATCC 700651 / DSM 11573 / NCIMB 13689 / SK2).